Here is a 1142-residue protein sequence, read N- to C-terminus: E3 ubiquitin-protein ligase TRIM33 (1142 aa).

Over residues 1-18 (MAENKGGGEAESGGGGSG) the composition is skewed to gly residues. The segment at 1–132 (MAENKGGGEA…PGSSSGPPLG (132 aa)) is disordered. Residues 1–163 (MAENKGGGEA…AEPKLLPCLH (163 aa)) are necessary for E3 ubiquitin-protein ligase activity and repression of SMAD4 signaling and transcriptional repression. A compositionally biased stretch (low complexity) spans 19–42 (SAPVTAGAAGPTAQEAEPPLAAVL). Residues 52–64 (RAGAEGGAAGPDD) show a composition bias toward gly residues. Over residues 65 to 99 (GGVAAASSSSAPAASVPAASVGSAVPGGAASTPAP) the composition is skewed to low complexity. Positions 100 to 122 (AAAPAPAPAPAPAPAPAPAPAPA) are enriched in pro residues. An RING-type zinc finger spans residues 141 to 201 (CAVCQQSLQS…VGVIRCPVCR (61 aa)). 2 B box-type zinc fingers span residues 228–275 (KSEQ…IRKK) and 287–328 (QRPV…YQFL). Zn(2+) is bound by residues C233, C236, C257, H261, C292, H295, C315, and H320. The tract at residues 315-417 (CQLLEHKEHR…QMKLLQQQND (103 aa)) is necessary for oligomerization. Positions 315 to 417 (CQLLEHKEHR…QMKLLQQQND (103 aa)) form a coiled coil. Glycyl lysine isopeptide (Lys-Gly) (interchain with G-Cter in SUMO2) cross-links involve residues K345, K350, K497, and K520. R531 is modified (asymmetric dimethylarginine; alternate). Omega-N-methylarginine; alternate is present on R531. K543 participates in a covalent cross-link: Glycyl lysine isopeptide (Lys-Gly) (interchain with G-Cter in SUMO2). The residue at position 551 (R551) is an Omega-N-methylarginine. Residue R593 is modified to Asymmetric dimethylarginine. Asymmetric dimethylarginine; alternate is present on R607. The residue at position 607 (R607) is an Omega-N-methylarginine; alternate. R614 and R620 each carry asymmetric dimethylarginine. Disordered regions lie at residues 657–676 (PTSP…TSPS), 688–707 (NPEN…EDAG), and 718–834 (YISG…PPLS). The segment covering 738-774 (PSALSPGSSGLSNSHTPVRPPSTSSTGSRGSCGSSGR) has biased composition (low complexity). Composition is skewed to basic and acidic residues over residues 775-794 (TAEK…KQEP) and 808-817 (KQEKTEDGRR). 2 positions are modified to N6-acetyllysine; alternate: K778 and K784. Residues K778 and K784 each participate in a glycyl lysine isopeptide (Lys-Gly) (interchain with G-Cter in SUMO2); alternate cross-link. Residue K789 forms a Glycyl lysine isopeptide (Lys-Gly) (interchain with G-Cter in SUMO2) linkage. Glycyl lysine isopeptide (Lys-Gly) (interchain with G-Cter in SUMO2); alternate cross-links involve residues K791 and K808. Residues K791 and K808 each participate in a glycyl lysine isopeptide (Lys-Gly) (interchain with G-Cter in SUMO1); alternate cross-link. At K808 the chain carries N6-acetyllysine; alternate. Residue K811 forms a Glycyl lysine isopeptide (Lys-Gly) (interchain with G-Cter in SUMO2) linkage. Phosphoserine is present on S818. Residues 822–834 (LSSPESSLTPPLS) are compositionally biased toward low complexity. T830 is subject to Phosphothreonine. A Glycyl lysine isopeptide (Lys-Gly) (interchain with G-Cter in SUMO2) cross-link involves residue K876. Position 877 is a phosphoserine (S877). The PHD-type zinc finger occupies 902-949 (EDWCAVCQNGGDLLCCEKCPKVFHLTCHVPTLLSFPSGDWICTFCRDI). The residue at position 966 (K966) is an N6-acetyllysine. K968 carries the N6-acetyllysine; alternate modification. A Glycyl lysine isopeptide (Lys-Gly) (interchain with G-Cter in SUMO2); alternate cross-link involves residue K968. The region spanning 972 to 1095 (GLSPVDQRKC…LYFEDKLSEI (124 aa)) is the Bromo domain. Residues K1022 and K1058 each participate in a glycyl lysine isopeptide (Lys-Gly) (interchain with G-Cter in SUMO2) cross-link. T1066 carries the post-translational modification Phosphothreonine. K1072 is covalently cross-linked (Glycyl lysine isopeptide (Lys-Gly) (interchain with G-Cter in SUMO2)). The interval 1103-1142 (PLPEFEQDEDDGEVTEDSDEDFIQPRRKRLKSDERPVHIK) is disordered. Positions 1107–1124 (FEQDEDDGEVTEDSDEDF) are enriched in acidic residues. T1117 carries the phosphothreonine modification. Phosphoserine is present on S1120. K1133 participates in a covalent cross-link: Glycyl lysine isopeptide (Lys-Gly) (interchain with G-Cter in SUMO2). The segment covering 1133–1142 (KSDERPVHIK) has biased composition (basic and acidic residues). A Phosphoserine modification is found at S1134.

This sequence belongs to the TRIM/RBCC family. In terms of assembly, homooligomer and heterooligomer with TRIM24 and TRIM28 family members. Interacts with SMAD4 in unstimulated cells. Found in a complex with SMAD2 and SMAD3 upon addition of TGF-beta. Interacts with SMAD2 and SMAD3. Interacts with SMAD4 under basal and induced conditions and, upon TGF-beta signaling, with activated SMAD2. Forms a ternary complex with SMAD4 and SMAD2 upon TGF-beta signaling. Sumoylated with SUMO1. Ubiquitous with high level in testis.

Its subcellular location is the nucleus. It catalyses the reaction S-ubiquitinyl-[E2 ubiquitin-conjugating enzyme]-L-cysteine + [acceptor protein]-L-lysine = [E2 ubiquitin-conjugating enzyme]-L-cysteine + N(6)-ubiquitinyl-[acceptor protein]-L-lysine.. It functions in the pathway protein modification; protein ubiquitination. In terms of biological role, acts as an E3 ubiquitin-protein ligase. Promotes SMAD4 ubiquitination, nuclear exclusion and degradation via the ubiquitin proteasome pathway. May act as a transcriptional repressor. Inhibits the transcriptional response to TGF-beta/BMP signaling cascade. Plays a role in the control of cell proliferation. Its association with SMAD2 and SMAD3 stimulates erythroid differentiation of hematopoietic stem/progenitor. Monoubiquitinates SMAD4 and acts as an inhibitor of SMAD4-dependent TGF-beta/BMP signaling cascade (Monoubiquitination of SMAD4 hampers its ability to form a stable complex with activated SMAD2/3 resulting in inhibition of TGF-beta/BMP signaling cascade). The chain is E3 ubiquitin-protein ligase TRIM33 (Trim33) from Mus musculus (Mouse).